The chain runs to 243 residues: Venom nerve growth factor (243 aa).

The first 18 residues, 1–18, serve as a signal peptide directing secretion; that stretch reads MSMLCYTLIIVFLIGIWA. The propeptide occupies 19–125; the sequence is APKSEDNVPL…TLNRNIRAKR (107 aa). Positions 47-66 are enriched in basic and acidic residues; sequence GLKTSRNTDQRHPAPKKAED. Residues 47 to 69 are disordered; it reads GLKTSRNTDQRHPAPKKAEDQEL. 3 disulfides stabilise this stretch: cysteine 139–cysteine 204, cysteine 182–cysteine 232, and cysteine 192–cysteine 234. Residue asparagine 148 is glycosylated (N-linked (GlcNAc...) asparagine).

Belongs to the NGF-beta family. In terms of assembly, homodimer; non-covalently linked. As to expression, expressed by the venom gland.

Its subcellular location is the secreted. Its function is as follows. Nerve growth factor is important for the development and maintenance of the sympathetic and sensory nervous systems. It stimulates division and differentiation of sympathetic and embryonic sensory neurons as well as basal forebrain cholinergic neurons in the brain. Its relevance in the snake venom is not clear. However, it has been shown to inhibit metalloproteinase-dependent proteolysis of platelet glycoprotein Ib alpha, suggesting a metalloproteinase inhibition to prevent metalloprotease autodigestion and/or protection against prey proteases. Binds a lipid between the two protein chains in the homodimer. The lipid-bound form promotes histamine relase from mouse mast cells, contrary to the lipid-free form. The sequence is that of Venom nerve growth factor from Oxyuranus scutellatus scutellatus (Australian taipan).